A 45-amino-acid polypeptide reads, in one-letter code: MSKRTYQPNNRRRAKTHGFRVRMRTRAGRAIIAARRRKGRRELTA.

This sequence belongs to the bacterial ribosomal protein bL34 family.

The chain is Large ribosomal subunit protein bL34 from Acidothermus cellulolyticus (strain ATCC 43068 / DSM 8971 / 11B).